The primary structure comprises 293 residues: Pyridoxal 5'-phosphate synthase subunit PdxS (293 aa).

Asp-23 is a binding site for D-ribose 5-phosphate. Lys-80 serves as the catalytic Schiff-base intermediate with D-ribose 5-phosphate. Residue Gly-152 participates in D-ribose 5-phosphate binding. Residue Arg-164 participates in D-glyceraldehyde 3-phosphate binding. D-ribose 5-phosphate is bound by residues Gly-213 and 234–235; that span reads GS.

It belongs to the PdxS/SNZ family. In the presence of PdxT, forms a dodecamer of heterodimers.

It catalyses the reaction aldehydo-D-ribose 5-phosphate + D-glyceraldehyde 3-phosphate + L-glutamine = pyridoxal 5'-phosphate + L-glutamate + phosphate + 3 H2O + H(+). Its pathway is cofactor biosynthesis; pyridoxal 5'-phosphate biosynthesis. Catalyzes the formation of pyridoxal 5'-phosphate from ribose 5-phosphate (RBP), glyceraldehyde 3-phosphate (G3P) and ammonia. The ammonia is provided by the PdxT subunit. Can also use ribulose 5-phosphate and dihydroxyacetone phosphate as substrates, resulting from enzyme-catalyzed isomerization of RBP and G3P, respectively. The polypeptide is Pyridoxal 5'-phosphate synthase subunit PdxS (Chloroflexus aurantiacus (strain ATCC 29366 / DSM 635 / J-10-fl)).